The chain runs to 536 residues: Probable 1,4-beta-D-glucan cellobiohydrolase B (536 aa).

Residues 1 to 21 (MSSFQVYRAALLLSILATANA) form the signal peptide. The interval 22 to 458 (QQVGTYTTET…SNIKFGPIGS (437 aa)) is catalytic. Residue glutamate 233 is the Nucleophile of the active site. Glutamate 238 serves as the catalytic Proton donor. Residues asparagine 351 and asparagine 414 are each glycosylated (N-linked (GlcNAc...) asparagine). The interval 459–500 (TYSSGSSSGSGSSSSSSSTTTKATSTTLKTTSTTSSGSSSTS) is ser/Thr-rich linker. The disordered stretch occupies residues 464 to 499 (SSSGSGSSSSSSSTTTKATSTTLKTTSTTSSGSSST). Residues 500-536 (SAAQAYGQCGGQGWTGPTTCVSGYTCTYENAYYSQCL) enclose the CBM1 domain. Disulfide bonds link cysteine 508–cysteine 525 and cysteine 519–cysteine 535.

This sequence belongs to the glycosyl hydrolase 7 (cellulase C) family.

It localises to the secreted. The catalysed reaction is Hydrolysis of (1-&gt;4)-beta-D-glucosidic linkages in cellulose and cellotetraose, releasing cellobiose from the non-reducing ends of the chains.. The biological conversion of cellulose to glucose generally requires three types of hydrolytic enzymes: (1) Endoglucanases which cut internal beta-1,4-glucosidic bonds; (2) Exocellobiohydrolases that cut the disaccharide cellobiose from the non-reducing end of the cellulose polymer chain; (3) Beta-1,4-glucosidases which hydrolyze the cellobiose and other short cello-oligosaccharides to glucose. The sequence is that of Probable 1,4-beta-D-glucan cellobiohydrolase B (cbhB) from Aspergillus niger (strain ATCC MYA-4892 / CBS 513.88 / FGSC A1513).